A 542-amino-acid chain; its full sequence is La-related protein 7 homolog (542 aa).

In terms of domain architecture, HTH La-type RNA-binding spans 112–239; sequence VAEELDIKES…KRRFPFNLEQ (128 aa). In terms of domain architecture, RRM spans 247–335; sequence RTLYIDFLPP…GSIRIITYKK (89 aa). The 169-residue stretch at 374-542 folds into the xRRM domain; the sequence is EIKQNCLIKI…KQNITQNYNK (169 aa).

It belongs to the LARP7 family. As to quaternary structure, component of the telomerase holoenzyme complex, composed of the catalytic core (the catalytic subunit TERT, the telomerase RNA template component TER and TAP65/p65), which is associated with two heterotrimeric subcomplexes: (i) the replication protein A (RPA)-related subcomplex, composed of TEB1, RPA2/TEB2 and RPA3/TEB3 and (ii) the CST-like subcomplex, composed of TAP75/p75, TAP45/p45 and TAP19/p19. TEB1 and the CST-like subcomplex are tethered to the catalytic core by TAP50/p50.

The protein localises to the chromosome. Its subcellular location is the telomere. Its function is as follows. RNA-binding protein required for assembly of the holoenzyme telomerase ribonucleoprotein (RNP) complex. Telomerase is an essential ribonucleoprotein enzyme that copies new telomeric repeats onto chromosome ends by repetitively synthesizing the short telomere-repeat sequence 5'-TTGGGG-3' using an RNA template component TER. TAP65/p65 specifically binds telomerase RNA template TER and is required for biogenesis and placement of the TER stem-terminus element: TAP65/p65 first protects the 3'-end of TER from degradation and acts as a chaperone to correctly fold TER for protein binding; it then bends TER stem-loop IV to position it for interaction of stem-loop IV with catalytic TERT RNA-binding domain. In Tetrahymena thermophila (strain SB210), this protein is La-related protein 7 homolog.